We begin with the raw amino-acid sequence, 28 residues long: Dermaseptin-1 (28 aa).

Glutamine 28 is modified (glutamine amide).

Expressed by the skin glands.

It localises to the secreted. In terms of biological role, has antimicrobial activity. The polypeptide is Dermaseptin-1 (Phyllomedusa tomopterna (Tiger-striped leaf frog)).